Consider the following 121-residue polypeptide: Ribosome-binding factor A (121 aa).

Belongs to the RbfA family. As to quaternary structure, monomer. Binds 30S ribosomal subunits, but not 50S ribosomal subunits or 70S ribosomes.

It is found in the cytoplasm. Functionally, one of several proteins that assist in the late maturation steps of the functional core of the 30S ribosomal subunit. Associates with free 30S ribosomal subunits (but not with 30S subunits that are part of 70S ribosomes or polysomes). Required for efficient processing of 16S rRNA. May interact with the 5'-terminal helix region of 16S rRNA. This chain is Ribosome-binding factor A, found in Oenococcus oeni (strain ATCC BAA-331 / PSU-1).